The following is a 196-amino-acid chain: Large ribosomal subunit protein bL25 (196 aa).

Residues 177–196 (VISIAPPKKDAEAETESAAG) are disordered.

Belongs to the bacterial ribosomal protein bL25 family. CTC subfamily. Part of the 50S ribosomal subunit; part of the 5S rRNA/L5/L18/L25 subcomplex. Contacts the 5S rRNA. Binds to the 5S rRNA independently of L5 and L18.

Its function is as follows. This is one of the proteins that binds to the 5S RNA in the ribosome where it forms part of the central protuberance. The sequence is that of Large ribosomal subunit protein bL25 from Chlorobium limicola (strain DSM 245 / NBRC 103803 / 6330).